An 86-amino-acid chain; its full sequence is Toxin TdNa7 (86 aa).

The N-terminal stretch at 1–20 (MTRFVLFLSCFFLIGMVVEC) is a signal peptide. Residues 21-83 (KDGYLMGPDG…TWERATNTCG (63 aa)) form the LCN-type CS-alpha/beta domain. 4 cysteine pairs are disulfide-bonded: C31–C82, C35–C57, C43–C63, and C47–C65. The residue at position 84 (K84) is a Lysine amide.

It belongs to the long (4 C-C) scorpion toxin superfamily. Sodium channel inhibitor family. Beta subfamily. Expressed by the venom gland.

Its subcellular location is the secreted. Functionally, beta toxins bind voltage-independently at site-4 of sodium channels (Nav) and shift the voltage of activation toward more negative potentials thereby affecting sodium channel activation and promoting spontaneous and repetitive firing. This chain is Toxin TdNa7, found in Tityus discrepans (Venezuelan scorpion).